The sequence spans 346 residues: tRNA N6-adenosine threonylcarbamoyltransferase (346 aa).

Fe cation contacts are provided by H110 and H114. Residues 132 to 136, D165, G178, and N274 contribute to the substrate site; that span reads LLSGG. Fe cation is bound at residue D298.

The protein belongs to the KAE1 / TsaD family. Fe(2+) serves as cofactor.

It is found in the cytoplasm. It catalyses the reaction L-threonylcarbamoyladenylate + adenosine(37) in tRNA = N(6)-L-threonylcarbamoyladenosine(37) in tRNA + AMP + H(+). In terms of biological role, required for the formation of a threonylcarbamoyl group on adenosine at position 37 (t(6)A37) in tRNAs that read codons beginning with adenine. Is involved in the transfer of the threonylcarbamoyl moiety of threonylcarbamoyl-AMP (TC-AMP) to the N6 group of A37, together with TsaE and TsaB. TsaD likely plays a direct catalytic role in this reaction. This Borreliella afzelii (strain PKo) (Borrelia afzelii) protein is tRNA N6-adenosine threonylcarbamoyltransferase.